The following is a 45-amino-acid chain: uncharacterized protein (45 aa).

This is an uncharacterized protein from Escherichia coli (Bacteriophage T4).